We begin with the raw amino-acid sequence, 325 residues long: UDP-N-acetylglucosamine transporter (325 aa).

The next 8 membrane-spanning stretches (helical) occupy residues 8-24, 42-58, 138-154, 173-189, 209-225, 246-262, 268-284, and 295-311; these read VSLGILVFQTTSLVLTM, AVVVAELLKIMACILLV, VYQWLSLVILMTGVAFV, FVGLMAVLTACFSSGFA, IQLGFFGSIFGLMGVYI, IVVVLQALGGLVIAAVI, ILKGFATSLSIILSTLI, and TSVFFLGAILVITATFL.

The protein belongs to the nucleotide-sugar transporter family. SLC35A subfamily. Interacts with SLC35A2; the interaction is reduced in the presence of SLC35A4. Found in a complex with SLC35A2 and SLC35A4. Interacts with MGAT4B. O-Glcnacylation regulates the stability of SLC35A3 and the specific complex formation with MGAT4B.

Its subcellular location is the golgi apparatus membrane. It carries out the reaction UMP(out) + UDP-N-acetyl-alpha-D-glucosamine(in) = UMP(in) + UDP-N-acetyl-alpha-D-glucosamine(out). Transports diphosphate-N-acetylglucosamine (UDP-GlcNAc) from the cytosol into the lumen of the Golgi apparatus, functioning as an antiporter that exchanges UDP-N-acetyl-alpha-D-glucosamine for UMP. May supply UDP-GlcNAc as substrate for Golgi-resident glycosyltransferases that generate highly branched, multiantennary complex N-glycans and keratan sulfate. However, the exact role of SLC35A3 still needs to be elucidated, it could be a member of a catalytically more efficient multiprotein complex rather than function independently as a single transporter. The protein is UDP-N-acetylglucosamine transporter (SLC35A3) of Homo sapiens (Human).